Reading from the N-terminus, the 209-residue chain is Probable glutathione peroxidase 8 (209 aa).

M1 carries the N-acetylmethionine modification. Residues 18–40 (IFAVLLSMVLCTVMLFLLQLKFL) form a helical membrane-spanning segment. C79 is an active-site residue.

It belongs to the glutathione peroxidase family.

It is found in the membrane. The enzyme catalyses 2 glutathione + H2O2 = glutathione disulfide + 2 H2O. In Mus musculus (Mouse), this protein is Probable glutathione peroxidase 8 (Gpx8).